Reading from the N-terminus, the 124-residue chain is Histone H2B, embryonic (124 aa).

The tract at residues 1–31 (MAPTAQVAKKGSKKAVKGTKTAXGGKKRNRK) is disordered. A glycan (O-linked (GlcNAc) serine) is linked at serine 111. Residue lysine 119 forms a Glycyl lysine isopeptide (Lys-Gly) (interchain with G-Cter in ubiquitin) linkage.

It belongs to the histone H2B family. In terms of assembly, the nucleosome is a histone octamer containing two molecules each of H2A, H2B, H3 and H4 assembled in one H3-H4 heterotetramer and two H2A-H2B heterodimers. The octamer wraps approximately 147 bp of DNA. In terms of processing, monoubiquitination of Lys-119 gives a specific tag for epigenetic transcriptional activation and is also prerequisite for histone H3 'Lys-4' and 'Lys-79' methylation. GlcNAcylation at Ser-111 promotes monoubiquitination of Lys-119. It fluctuates in response to extracellular glucose, and associates with transcribed genes.

The protein localises to the nucleus. Its subcellular location is the chromosome. Its function is as follows. Core component of nucleosome. Nucleosomes wrap and compact DNA into chromatin, limiting DNA accessibility to the cellular machineries which require DNA as a template. Histones thereby play a central role in transcription regulation, DNA repair, DNA replication and chromosomal stability. DNA accessibility is regulated via a complex set of post-translational modifications of histones, also called histone code, and nucleosome remodeling. This Strongylocentrotus purpuratus (Purple sea urchin) protein is Histone H2B, embryonic.